Reading from the N-terminus, the 382-residue chain is Mannitol-1-phosphate 5-dehydrogenase (382 aa).

Residue A3–G14 participates in NAD(+) binding. K269 is modified (N6-acetyllysine).

This sequence belongs to the mannitol dehydrogenase family.

It catalyses the reaction D-mannitol 1-phosphate + NAD(+) = beta-D-fructose 6-phosphate + NADH + H(+). The chain is Mannitol-1-phosphate 5-dehydrogenase from Shigella boydii serotype 18 (strain CDC 3083-94 / BS512).